The primary structure comprises 611 residues: Glutamine--fructose-6-phosphate aminotransferase [isomerizing] (611 aa).

Catalysis depends on C2, which acts as the Nucleophile; for GATase activity. The region spanning 2–219 (CGIVGAVAER…EGDIAEIRRD (218 aa)) is the Glutamine amidotransferase type-2 domain. SIS domains are found at residues 287-427 (AADL…VRGT) and 460-601 (IAEL…VDQP). K606 serves as the catalytic For Fru-6P isomerization activity.

As to quaternary structure, homodimer.

It is found in the cytoplasm. It catalyses the reaction D-fructose 6-phosphate + L-glutamine = D-glucosamine 6-phosphate + L-glutamate. Its function is as follows. Catalyzes the first step in hexosamine metabolism, converting fructose-6P into glucosamine-6P using glutamine as a nitrogen source. The chain is Glutamine--fructose-6-phosphate aminotransferase [isomerizing] from Pseudomonas putida (strain ATCC 47054 / DSM 6125 / CFBP 8728 / NCIMB 11950 / KT2440).